Reading from the N-terminus, the 392-residue chain is MAKQSTLGSKELNPRQVEENNLLATKLSEIYKKWGYQEVAPPQVEGLKTLMAGGGIDSKEILKLVIDEPVGLRPEMTASIARAASTRYVAEPRPLRLWASGTIFKSREESDGKIVIDESLQSGVELFGIEGMEIEVELLYLLIESLKKLNIDESSMPILLINHISLMELIISKFSKSSKEKVTDILSNFDLIEIEKLELDFDERNTLKLLQELRGSPRNVIKTLESLYGNNKILDSLTKIFNIIEPISNKYNIQLQLDPTFKPHYELYTGIVFELVCNTRETPVVIARGGRYDELVKMFNENPEDEIAAGFSYSIDKIRELNTRLETFDTNPERILVAYGPNKTIKDAIECQAKLHEKGYVAIIELNSCINEDHAMKLVNQRKCTKLKWINS.

It belongs to the class-II aminoacyl-tRNA synthetase family. HisZ subfamily. Heteromultimer composed of HisG and HisZ subunits.

Its subcellular location is the cytoplasm. It participates in amino-acid biosynthesis; L-histidine biosynthesis; L-histidine from 5-phospho-alpha-D-ribose 1-diphosphate: step 1/9. Functionally, required for the first step of histidine biosynthesis. May allow the feedback regulation of ATP phosphoribosyltransferase activity by histidine. This chain is ATP phosphoribosyltransferase regulatory subunit, found in Prochlorococcus marinus (strain MIT 9211).